The following is a 232-amino-acid chain: Thiamine import ATP-binding protein ThiQ (232 aa).

In terms of domain architecture, ABC transporter spans 2-230 (LKLTDITWLY…KASASALLGI (229 aa)). 32 to 39 (GPSGAGKS) serves as a coordination point for ATP.

Belongs to the ABC transporter superfamily. Thiamine importer (TC 3.A.1.19.1) family. As to quaternary structure, the complex is composed of two ATP-binding proteins (ThiQ), two transmembrane proteins (ThiP) and a solute-binding protein (ThiB).

Its subcellular location is the cell inner membrane. It catalyses the reaction thiamine(out) + ATP + H2O = thiamine(in) + ADP + phosphate + H(+). In terms of biological role, part of the ABC transporter complex ThiBPQ involved in thiamine import. Responsible for energy coupling to the transport system. The chain is Thiamine import ATP-binding protein ThiQ from Shigella sonnei (strain Ss046).